The following is a 229-amino-acid chain: Coiled-coil domain-containing protein 134 (229 aa).

The N-terminal stretch at 1–22 (MDLLQFLAAFSVLLWPGTEVTG) is a signal peptide. Asn-148 carries an N-linked (GlcNAc...) asparagine glycan. The disordered stretch occupies residues 182–229 (FKTDQTEFIPSTDPFQKALREEEKRRKKEERRKEIRKGPRISRSQSEL). Positions 196–218 (FQKALREEEKRRKKEERRKEIRK) form a coiled coil. A Prevents secretion from ER motif is present at residues 226–229 (QSEL).

This sequence belongs to the CCDC134 family. As to quaternary structure, interacts with TADA2A. Associates with the PCAF complex via TADA2A binding. O-glycosylated, with additional sialic acid modifications.

It is found in the endoplasmic reticulum lumen. Its subcellular location is the secreted. The protein localises to the cytoplasm. The protein resides in the nucleus. Molecular adapter required to prevent protein hyperglycosylation of HSP90B1: during translation, associates with nascent HSP90B1 and the STT3A catalytic component of the OST-A complex and tethers them to a specialized translocon that forms a microenvironment for HSP90B1 folding. In the CCDC134-containing translocon, STT3A associates with the SRT pseudosubstrate motif of HSP90B1, preventing access to facultative glycosylation sites until folding is completed, preventing hyperglycosylation and subsequent degradation of HSP90B1. In extracellular secreted form, promotes proliferation and activation of CD8(+) T-cells, suggesting a cytokine-like function. May inhibit ERK and JNK signaling activity. May suppress cell migration and invasion activity, via its effects on ERK and JNK signaling. May also localize in the nucleus: enhances stability of the PCAF histone acetyltransferase (HAT) complex member TADA2A and thus promotes PCAF-mediated histone acetyltransferase activity. Has a critical role in the regulation of osteogenesis and bone development. The sequence is that of Coiled-coil domain-containing protein 134 (Ccdc134) from Mus musculus (Mouse).